Here is a 71-residue protein sequence, read N- to C-terminus: BBSome-interacting protein 1 (71 aa).

The protein belongs to the BBIP10 family.

Its subcellular location is the cell projection. It is found in the cilium. It localises to the cytoplasm. Its function is as follows. Required for primary cilia assembly. This is BBSome-interacting protein 1 (bbip1) from Nematostella vectensis (Starlet sea anemone).